Reading from the N-terminus, the 180-residue chain is Succinate dehydrogenase cytochrome B subunit, mitochondrial (180 aa).

Residues 1 to 82 lie on the Mitochondrial matrix side of the membrane; the sequence is MFATRSFCLS…WYLSSLHRIT (82 aa). The chain crosses the membrane as a helical span at residues 83 to 103; sequence GCVVAGTLYAFAMGYLVAPLA. Residues 104-122 lie on the Mitochondrial intermembrane side of the membrane; that stretch reads GYSLDTATISGLIQQVPTW. A helical transmembrane segment spans residues 123 to 143; it reads IKVPAKFVISYPLTFHIFNGI. H138 contributes to the heme binding site. At 144 to 159 the chain is on the mitochondrial matrix side; that stretch reads RHLIWDTTKELSLKGV. A helical transmembrane segment spans residues 160–180; it reads YRTGYAVLALSVLTSGYFAMI.

It belongs to the cytochrome b560 family. Forms part of complex II containing four subunits: a 70 kDa flavoprotein (FP), a 27 kDa iron-sulfur protein (IP), a cytochrome B and a membrane-anchoring protein. Heme serves as cofactor.

The protein resides in the mitochondrion inner membrane. Its pathway is carbohydrate metabolism; tricarboxylic acid cycle. Its function is as follows. Membrane-anchoring subunit of succinate dehydrogenase (SDH) that is involved in complex II of the mitochondrial electron transport chain and is responsible for transferring electrons from succinate to ubiquinone (coenzyme Q). The polypeptide is Succinate dehydrogenase cytochrome B subunit, mitochondrial (sdh3) (Schizosaccharomyces pombe (strain 972 / ATCC 24843) (Fission yeast)).